The following is a 131-amino-acid chain: TGSCCGPTFSSLSCGGGCLQPRYYRDPCCCRPVSCQTVSRPVTFVPRCTRPICEPCRRPVCCDPCSLQEGCCRPITCCPTSCQAVVCRPCCWATTCCQPVSVQCPCCRPTSCQPAPCSRTTCRTFRTSPCC.

In terms of tissue distribution, wool.

The keratin products of mammalian epidermal derivatives such as wool and hair consist of microfibrils embedded in a rigid matrix of other proteins. The matrix proteins include the high-sulfur and high-tyrosine keratins, having molecular weights of 6-20 kDa, whereas the microfibrils contain the larger, low-sulfur keratins (40-56 kDa). The chain is Keratin, high-sulfur matrix protein, IIIA3 from Ovis aries (Sheep).